The chain runs to 131 residues: Small ribosomal subunit protein eS6 (131 aa).

Positions 76–95 (APPGFKPKRKGERRRKTVRG) are disordered. A compositionally biased stretch (basic residues) spans 81–93 (KPKRKGERRRKTV).

This sequence belongs to the eukaryotic ribosomal protein eS6 family.

In Methanocaldococcus jannaschii (strain ATCC 43067 / DSM 2661 / JAL-1 / JCM 10045 / NBRC 100440) (Methanococcus jannaschii), this protein is Small ribosomal subunit protein eS6.